The primary structure comprises 104 residues: Sweet protein mabinlin-1 (104 aa).

4 disulfides stabilise this stretch: C4/C53, C17/C42, C43/C91, and C55/C99.

The protein belongs to the 2S seed storage albumins family. Heterodimer of a small A and a large B chain linked by disulfide bonds.

2S seed storage protein having sweetness-inducing activity. This form is not heat stable. The protein is Sweet protein mabinlin-1 of Capparis masaikai (Mabinlang).